We begin with the raw amino-acid sequence, 190 residues long: MEKVPGDMEIERRERSEELSEAERKAVQATWARLYANCEDVGVAILVRFFVNFPSAKQYFSQFRHMEDPLEMERSPQLRKHACRVMGALNTVVENLHDPDKVSSVLALVGKAHALKHKVEPMYFKILSGVILEVIAEEFANDFPVETQKAWAKLRGLIYSHVTAAYKEVGWVQQVPNTTTPPATLPSSGP.

Residues 1–21 (MEKVPGDMEIERRERSEELSE) are disordered. The Globin domain occupies 18 to 167 (ELSEAERKAV…IYSHVTAAYK (150 aa)). The cysteines at positions 38 and 83 are disulfide-linked. Residues His-81 and His-113 each coordinate heme b.

The protein belongs to the globin family. As to quaternary structure, monomeric. Homodimer; disulfide-linked in vitro. Also homooligomeric in vitro. The formation of an intramolecular disulfide bond between cysteines Cys-38 and Cys-83 specifically enhances the nitrite reductase activity. Expressed in brain and retina by non-neuronal cells (at protein level). This is the major globin expressed in vascular smooth muscle and is not present in the endothelium (at protein level).

It localises to the cytoplasm. Its subcellular location is the nucleus. The enzyme catalyses Fe(II)-heme b-[protein] + nitric oxide + O2 = Fe(III)-heme b-[protein] + nitrate. It catalyses the reaction 2 superoxide + 2 H(+) = H2O2 + O2. It carries out the reaction Fe(III)-heme b-[protein] + nitric oxide + H2O = Fe(II)-heme b-[protein] + nitrite + 2 H(+). The catalysed reaction is H2O2 + AH2 = A + 2 H2O. The nitric oxide dioxygenase activity is activated by a reducing system composed of cytochrome b5, its upstream reductase CYB5R3 and NADH. Its function is as follows. Probable multifunctional globin with a hexacoordinated heme iron required for the catalysis of various reactions depending on redox condition of the cell as well as oxygen availability. Has a nitric oxide dioxygenase (NOD) activity and is most probably involved in cell-mediated and oxygen-dependent nitric oxide consumption. By scavenging this second messenger may regulate several biological processes including endothelium-mediated vasodilation and vascular tone. Under normoxic conditions functions as a nitric oxide dioxygenase (NOD) but under hypoxic conditions the globin may switch its function to that of a nitrite (NO2) reductase (NiR), generating nitric oxide. Could also have peroxidase and superoxide dismutase activities, detoxifying reactive oxygen species and protecting cells against oxidative stress. Also binds dioxygen with low affinity and could function as an oxygen sensor but has probably no function as a respiratory oxygen carrier. This is Cytoglobin from Mus musculus (Mouse).